Reading from the N-terminus, the 102-residue chain is NADH-quinone oxidoreductase subunit K (102 aa).

3 consecutive transmembrane segments (helical) span residues 6–26, 30–50, and 63–83; these read LIAM…GVLA, IMFQ…GFVA, and MFIL…ALFL.

This sequence belongs to the complex I subunit 4L family. As to quaternary structure, NDH-1 is composed of 14 different subunits. Subunits NuoA, H, J, K, L, M, N constitute the membrane sector of the complex.

Its subcellular location is the cell inner membrane. It carries out the reaction a quinone + NADH + 5 H(+)(in) = a quinol + NAD(+) + 4 H(+)(out). NDH-1 shuttles electrons from NADH, via FMN and iron-sulfur (Fe-S) centers, to quinones in the respiratory chain. The immediate electron acceptor for the enzyme in this species is believed to be ubiquinone. Couples the redox reaction to proton translocation (for every two electrons transferred, four hydrogen ions are translocated across the cytoplasmic membrane), and thus conserves the redox energy in a proton gradient. This chain is NADH-quinone oxidoreductase subunit K, found in Rhodopseudomonas palustris (strain BisB5).